The primary structure comprises 119 residues: Basic phospholipase A2 (119 aa).

Intrachain disulfides connect Cys-11-Cys-72, Cys-27-Cys-118, Cys-29-Cys-45, Cys-44-Cys-100, Cys-51-Cys-93, Cys-61-Cys-86, and Cys-79-Cys-91. Residues Tyr-28, Gly-30, and Gly-32 each coordinate Ca(2+). The active site involves His-48. Asp-49 serves as a coordination point for Ca(2+). Asn-82 carries N-linked (GlcNAc...) asparagine glycosylation. Asp-94 is a catalytic residue.

It belongs to the phospholipase A2 family. Group I subfamily. D49 sub-subfamily. Requires Ca(2+) as cofactor. Expressed by the venom gland.

The protein localises to the secreted. The catalysed reaction is a 1,2-diacyl-sn-glycero-3-phosphocholine + H2O = a 1-acyl-sn-glycero-3-phosphocholine + a fatty acid + H(+). In terms of biological role, snake venom phospholipase A2 (PLA2) that shows weak myotoxicity and induces edema in mice. Shows no cytotoxicity in vitro. Has an anticoagulant effect in vitro. PLA2 catalyzes the calcium-dependent hydrolysis of the 2-acyl groups in 3-sn-phosphoglycerides. The polypeptide is Basic phospholipase A2 (Micrurus mipartitus (Red-tailed coral snake)).